Consider the following 1429-residue polypeptide: Dicer-like protein 2 (1429 aa).

Positions methionine 21–cysteine 200 constitute a Helicase ATP-binding domain. Methionine 34 to threonine 41 contacts ATP. Positions aspartate 141–histidine 144 match the DEAH box motif. Positions alanine 335–arginine 501 constitute a Helicase C-terminal domain. The Dicer dsRNA-binding fold domain maps to alanine 528–threonine 622. RNase III domains are found at residues alanine 874–glycine 1014 and glutamine 1056–glycine 1250. Glutamate 1095, aspartate 1236, and glutamate 1239 together coordinate Mg(2+).

Belongs to the helicase family. Dicer subfamily. Requires Mg(2+) as cofactor. The cofactor is Mn(2+).

Its function is as follows. Dicer-like endonuclease involved in cleaving double-stranded RNA in the RNA interference (RNAi) pathway. Produces 21 to 25 bp dsRNAs (siRNAs) which target the selective destruction of homologous RNAs leading to sequence-specific suppression of gene expression, called post-transcriptional gene silencing (PTGS). Part of a broad host defense response against viral infection and transposons. The chain is Dicer-like protein 2 (dcl2) from Emericella nidulans (strain FGSC A4 / ATCC 38163 / CBS 112.46 / NRRL 194 / M139) (Aspergillus nidulans).